A 483-amino-acid chain; its full sequence is Cobyric acid synthase (483 aa).

One can recognise a GATase cobBQ-type domain in the interval 251–438 (ALIVAVPMLP…LHGIFSADRF (188 aa)). The active-site Nucleophile is Cys-333. The active site involves His-430.

Belongs to the CobB/CobQ family. CobQ subfamily.

It participates in cofactor biosynthesis; adenosylcobalamin biosynthesis. In terms of biological role, catalyzes amidations at positions B, D, E, and G on adenosylcobyrinic A,C-diamide. NH(2) groups are provided by glutamine, and one molecule of ATP is hydrogenolyzed for each amidation. The sequence is that of Cobyric acid synthase from Brucella abortus (strain S19).